The primary structure comprises 493 residues: Cysteine sulfinic acid decarboxylase (493 aa).

Position 305 is an N6-(pyridoxal phosphate)lysine (Lys305).

It belongs to the group II decarboxylase family. In terms of assembly, homodimer. Pyridoxal 5'-phosphate is required as a cofactor. In terms of tissue distribution, expressed in kidney and liver not detected in lymphoid tissues and lung. Expressed in kidney, liver and brain. 7 and 4 times higher expression in kidney and liver than in brain, respectively. Low level of detection in skeletal muscle. Expressed in brain, olfactory bulb, liver, skeletal muscle and kidney with the highest expression in liver and lowest in skeletal muscle (at protein level).

The enzyme catalyses L-aspartate + H(+) = beta-alanine + CO2. It catalyses the reaction 3-sulfino-L-alanine + H(+) = hypotaurine + CO2. The catalysed reaction is L-cysteate + H(+) = taurine + CO2. It participates in organosulfur biosynthesis; taurine biosynthesis; hypotaurine from L-cysteine: step 2/2. Its activity is regulated as follows. Activated by Mn(2+). Inhibited by bis-carboxymethyl-trithiocarbonate, ethylxanthogenacetic acid and 2,5-disulfoaniline. Not affected by Li(+) within 0.05-40 mM concentration range. Functionally, catalyzes the decarboxylation of L-aspartate, 3-sulfino-L-alanine (cysteine sulfinic acid), and L-cysteate to beta-alanine, hypotaurine and taurine, respectively. The preferred substrate is 3-sulfino-L-alanine. Does not exhibit any decarboxylation activity toward glutamate. This chain is Cysteine sulfinic acid decarboxylase, found in Mus musculus (Mouse).